A 366-amino-acid polypeptide reads, in one-letter code: G-protein coupled receptor 183-B (366 aa).

Over 1–24 (MMSPDLDLNFSSNCNLYDHRPVAR) the chain is Extracellular. N-linked (GlcNAc...) asparagine glycosylation is present at Asn-9. Residues 25–50 (VLIPLVYSIICPVGLLGNALALHVVI) form a helical membrane-spanning segment. Topologically, residues 51–70 (SSTTKINSITLYSANLAVSD) are cytoplasmic. A helical membrane pass occupies residues 71–88 (ILFCLSLPLRAVYYGLGF). Residues 89–98 (HWPMGEVLCK) are Extracellular-facing. The cysteines at positions 97 and 175 are disulfide-linked. Residues 99-120 (AIALLFYLNCYAGVNFMTCLAV) traverse the membrane as a helical segment. Residues 121–142 (DRFVALVFPARLAKLRKAKNVR) are Cytoplasmic-facing. The helical transmembrane segment at 143 to 161 (FVCLAIWLLVLAQTLPLLT) threads the bilayer. Topologically, residues 162–187 (IGLTKTEPDSSITCMEYPNFEGVFKG) are extracellular. A helical membrane pass occupies residues 188 to 210 (LPYMLIVAVVLGFGIPVMTIIAC). Over 211–236 (YSILTHKLHQAAKSNQLTERSGKTKK) the chain is Cytoplasmic. The chain crosses the membrane as a helical span at residues 237 to 260 (ARGVIAGVVFVFVVCFSPYHIDIL). Residues 261–280 (QYMIRKLLYETDCKELQSFQ) lie on the Extracellular side of the membrane. A helical transmembrane segment spans residues 281-305 (ISLHITVCLMNLNSCLDPFVYFFAC). The Cytoplasmic segment spans residues 306 to 366 (KGYKQKVMRM…QQICYQPSAT (61 aa)).

Belongs to the G-protein coupled receptor 1 family.

It is found in the cell membrane. Its function is as follows. Probable receptor for oxysterols that plays a central role during humoral immunity. Promotes activated B-cell localization in the outer follicle and interfollicular regions. This is G-protein coupled receptor 183-B (gpr183b) from Danio rerio (Zebrafish).